The chain runs to 307 residues: Phosphonates import ATP-binding protein PhnC (307 aa).

One can recognise an ABC transporter domain in the interval 4–252 (IRIERLSKTF…RLHALYGDDA (249 aa)). 37 to 44 (GASGSGKS) contributes to the ATP binding site. The span at 265-275 (AAREAAGEPAR) shows a compositional bias: basic and acidic residues. A disordered region spans residues 265-307 (AAREAAGEPARRAPAAFDSAGSPDLPDSQPASPRRMLAASSMR).

This sequence belongs to the ABC transporter superfamily. Phosphonates importer (TC 3.A.1.9.1) family. In terms of assembly, the complex is composed of two ATP-binding proteins (PhnC), two transmembrane proteins (PhnE) and a solute-binding protein (PhnD).

The protein localises to the cell inner membrane. The enzyme catalyses phosphonate(out) + ATP + H2O = phosphonate(in) + ADP + phosphate + H(+). Functionally, part of the ABC transporter complex PhnCDE involved in phosphonates import. Responsible for energy coupling to the transport system. The chain is Phosphonates import ATP-binding protein PhnC from Burkholderia pseudomallei (strain 1710b).